Consider the following 387-residue polypeptide: Lactosylceramide alpha-2,3-sialyltransferase (387 aa).

At 1–33 (MPNEFTSAKLRSDCSRTSLQWYTQTQHKMRRPS) the chain is on the cytoplasmic side. Residues 34–54 (LLLKDILKCMLVVFGVWLLYI) form a helical; Signal-anchor for type II membrane protein membrane-spanning segment. Topologically, residues 55-387 (LKLNYTAEEC…VVQDLSGGIH (333 aa)) are extracellular. N-linked (GlcNAc...) asparagine glycosylation is found at N58 and N208. A disulfide bridge links C167 with C325.

The protein belongs to the glycosyltransferase 29 family.

The protein localises to the golgi apparatus membrane. The enzyme catalyses a beta-D-Gal-(1-&gt;4)-beta-D-Glc-(1&lt;-&gt;1)-Cer(d18:1(4E)) + CMP-N-acetyl-beta-neuraminate = a ganglioside GM3 (d18:1(4E)) + CMP + H(+). It carries out the reaction ganglioside GA2 (d18:1(4E)/18:0) + CMP-N-acetyl-beta-neuraminate = ganglioside GM2 (d18:1(4E)/18:0) + CMP + H(+). The catalysed reaction is a beta-D-Gal-(1&lt;-&gt;1')-ceramide + CMP-N-acetyl-beta-neuraminate = N-acetyl-alpha-neuraminosyl-(2-&gt;3)-beta-D-galactosyl-(1&lt;-&gt;1')-ceramide + CMP + H(+). It catalyses the reaction ganglioside GA1 (d18:1(4E)/18:0) + CMP-N-acetyl-beta-neuraminate = ganglioside GM1 (d18:1(4E)/18:0) + CMP + H(+). In terms of biological role, transfers the sialyl group (N-acetyl-alpha-neuraminyl or NeuAc) from CMP-NeuAc to the non-reducing terminal galactose (Gal) of glycosphingolipids forming gangliosides (important molecules involved in the regulation of multiple cellular processes, including cell proliferation and differentiation, apoptosis, embryogenesis, development, and oncogenesis). Mainly involved in the biosynthesis of ganglioside GM3 but can also use different glycolipids as substrate acceptors such as D-galactosylceramide (GalCer), asialo-GM2 (GA2) and asialo-GM1 (GA1), although less preferentially than beta-D-Gal-(1-&gt;4)-beta-D-Glc-(1&lt;-&gt;1)-Cer (LacCer). In Rattus norvegicus (Rat), this protein is Lactosylceramide alpha-2,3-sialyltransferase (St3gal5).